Here is a 197-residue protein sequence, read N- to C-terminus: NADH-quinone oxidoreductase subunit B (197 aa).

[4Fe-4S] cluster is bound by residues cysteine 63, cysteine 64, cysteine 129, and cysteine 159.

It belongs to the complex I 20 kDa subunit family. As to quaternary structure, NDH-1 is composed of 14 different subunits. Subunits NuoB, C, D, E, F, and G constitute the peripheral sector of the complex. The cofactor is [4Fe-4S] cluster.

Its subcellular location is the cell inner membrane. The enzyme catalyses a quinone + NADH + 5 H(+)(in) = a quinol + NAD(+) + 4 H(+)(out). Functionally, NDH-1 shuttles electrons from NADH, via FMN and iron-sulfur (Fe-S) centers, to quinones in the respiratory chain. The immediate electron acceptor for the enzyme in this species is believed to be a menaquinone. Couples the redox reaction to proton translocation (for every two electrons transferred, four hydrogen ions are translocated across the cytoplasmic membrane), and thus conserves the redox energy in a proton gradient. This is NADH-quinone oxidoreductase subunit B from Bacteroides thetaiotaomicron (strain ATCC 29148 / DSM 2079 / JCM 5827 / CCUG 10774 / NCTC 10582 / VPI-5482 / E50).